A 182-amino-acid polypeptide reads, in one-letter code: NAD(P)H-quinone oxidoreductase subunit J (182 aa).

It belongs to the complex I 30 kDa subunit family. NDH-1 can be composed of about 15 different subunits; different subcomplexes with different compositions have been identified which probably have different functions.

The protein localises to the cellular thylakoid membrane. The enzyme catalyses a plastoquinone + NADH + (n+1) H(+)(in) = a plastoquinol + NAD(+) + n H(+)(out). The catalysed reaction is a plastoquinone + NADPH + (n+1) H(+)(in) = a plastoquinol + NADP(+) + n H(+)(out). Functionally, NDH-1 shuttles electrons from an unknown electron donor, via FMN and iron-sulfur (Fe-S) centers, to quinones in the respiratory and/or the photosynthetic chain. The immediate electron acceptor for the enzyme in this species is believed to be plastoquinone. Couples the redox reaction to proton translocation, and thus conserves the redox energy in a proton gradient. Cyanobacterial NDH-1 also plays a role in inorganic carbon-concentration. In Synechococcus sp. (strain WH7803), this protein is NAD(P)H-quinone oxidoreductase subunit J.